Here is a 493-residue protein sequence, read N- to C-terminus: Cysteine sulfinic acid decarboxylase (493 aa).

An N6-(pyridoxal phosphate)lysine modification is found at lysine 305.

It belongs to the group II decarboxylase family. As to quaternary structure, homodimer. The cofactor is pyridoxal 5'-phosphate. In terms of tissue distribution, expressed in kidney and liver not detected in lymphoid tissues and lung. Expressed in kidney, liver and brain. 7 and 4 times higher expression in kidney and liver than in brain, respectively. Low level of detection in skeletal muscle. Expressed in brain, olfactory bulb, liver, skeletal muscle and kidney with the highest expression in liver and lowest in skeletal muscle (at protein level).

The catalysed reaction is L-aspartate + H(+) = beta-alanine + CO2. It carries out the reaction 3-sulfino-L-alanine + H(+) = hypotaurine + CO2. It catalyses the reaction L-cysteate + H(+) = taurine + CO2. It participates in organosulfur biosynthesis; taurine biosynthesis; hypotaurine from L-cysteine: step 2/2. Its activity is regulated as follows. Activated by Mn(2+). Inhibited by bis-carboxymethyl-trithiocarbonate, ethylxanthogenacetic acid and 2,5-disulfoaniline. Not affected by Li(+) within 0.05-40 mM concentration range. Catalyzes the decarboxylation of L-aspartate, 3-sulfino-L-alanine (cysteine sulfinic acid), and L-cysteate to beta-alanine, hypotaurine and taurine, respectively. The preferred substrate is 3-sulfino-L-alanine. Does not exhibit any decarboxylation activity toward glutamate. The polypeptide is Cysteine sulfinic acid decarboxylase (Mus musculus (Mouse)).